The sequence spans 276 residues: Large ribosomal subunit protein uL2 (276 aa).

Residues 223 to 276 (AVMNPVDHPHGGGEGKNSVGRKSPLTPWGKPALGIKTRGRKTSDKFIVRRRNEK) are disordered. Residues 263-276 (KTSDKFIVRRRNEK) show a composition bias toward basic and acidic residues.

The protein belongs to the universal ribosomal protein uL2 family. In terms of assembly, part of the 50S ribosomal subunit. Forms a bridge to the 30S subunit in the 70S ribosome.

Functionally, one of the primary rRNA binding proteins. Required for association of the 30S and 50S subunits to form the 70S ribosome, for tRNA binding and peptide bond formation. It has been suggested to have peptidyltransferase activity; this is somewhat controversial. Makes several contacts with the 16S rRNA in the 70S ribosome. This Fusobacterium nucleatum subsp. nucleatum (strain ATCC 25586 / DSM 15643 / BCRC 10681 / CIP 101130 / JCM 8532 / KCTC 2640 / LMG 13131 / VPI 4355) protein is Large ribosomal subunit protein uL2.